Here is a 478-residue protein sequence, read N- to C-terminus: Zinc metalloproteinase/disintegrin (478 aa).

The signal sequence occupies residues 1 to 20 (MIQVLLVTICLAAFPYQGSS). The propeptide occupies 21 to 188 (IILESGNVND…PIKKVSQLNL (168 aa)). Residues 194–391 (RHVDIVVVVD…QNPQCILNKP (198 aa)) enclose the Peptidase M12B domain. A disulfide bridge connects residues Cys207 and Cys248. Asn279 is a glycosylation site (N-linked (GlcNAc...) (complex) asparagine). Intrachain disulfides connect Cys305–Cys386, Cys345–Cys370, and Cys347–Cys353. His330 provides a ligand contact to Zn(2+). Residue Glu331 is part of the active site. The Zn(2+) site is built by His334 and His340. The N-linked (GlcNAc...) (complex) asparagine glycan is linked to Asn369. The propeptide occupies 392 to 407 (LRTVSIPVSGNEHLEA). One can recognise a Disintegrin domain in the interval 397–478 (IPVSGNEHLE…ADCPRYHSHA (82 aa)). 6 cysteine pairs are disulfide-bonded: Cys411-Cys426, Cys413-Cys421, Cys420-Cys443, Cys434-Cys440, Cys439-Cys464, and Cys452-Cys471. Residues 456-458 (RGD) carry the Cell attachment site motif. A propeptide spanning residues 476–478 (SHA) is cleaved from the precursor.

This sequence belongs to the venom metalloproteinase (M12B) family. P-II subfamily. P-IIa sub-subfamily. Monomeric (disintegrin). Zn(2+) is required as a cofactor. Post-translationally, glycans are composed of 4 GlcNAc, 3 Man, 2 Gal, 2 NeuAC and 1 Fuc residue. As to expression, expressed by the venom gland.

It is found in the secreted. Its function is as follows. Impairs hemostasis in the envenomed animal. Functionally, inhibits platelet aggregation induced by ADP, thrombin, platelet-activating factor and collagen. Acts by inhibiting fibrinogen interaction with platelet receptors alpha-IIb/beta-3 (ITGA2B/ITGB3). The sequence is that of Zinc metalloproteinase/disintegrin from Calloselasma rhodostoma (Malayan pit viper).